The chain runs to 529 residues: Peptide chain release factor 3 (529 aa).

Residues 11-280 enclose the tr-type G domain; the sequence is AKRRTFAIIS…GLVEWAPAPM (270 aa). GTP is bound by residues 20–27, 88–92, and 142–145; these read SHPDAGKT, DTPGH, and NKLD.

It belongs to the TRAFAC class translation factor GTPase superfamily. Classic translation factor GTPase family. PrfC subfamily.

Its subcellular location is the cytoplasm. In terms of biological role, increases the formation of ribosomal termination complexes and stimulates activities of RF-1 and RF-2. It binds guanine nucleotides and has strong preference for UGA stop codons. It may interact directly with the ribosome. The stimulation of RF-1 and RF-2 is significantly reduced by GTP and GDP, but not by GMP. The sequence is that of Peptide chain release factor 3 from Shigella flexneri serotype 5b (strain 8401).